Consider the following 544-residue polypeptide: Aspartokinase (544 aa).

Residues 463-535 (LVGKQMVNFI…SAIGDSSAVD (73 aa)) enclose the ACT domain.

This sequence belongs to the aspartokinase family.

The enzyme catalyses L-aspartate + ATP = 4-phospho-L-aspartate + ADP. It participates in amino-acid biosynthesis; L-methionine biosynthesis via de novo pathway; L-homoserine from L-aspartate: step 1/3. It functions in the pathway amino-acid biosynthesis; L-threonine biosynthesis; L-threonine from L-aspartate: step 1/5. Its function is as follows. Phosphorylates aspartate, the first step in the biosynthesis of amino acids that derive from aspartate (the aspartate family of amino acids), including methioinine and threonine, the latter of which is a precursor to isoleucine. The sequence is that of Aspartokinase from Candida albicans (strain SC5314 / ATCC MYA-2876) (Yeast).